Here is a 227-residue protein sequence, read N- to C-terminus: Cytidylate kinase (227 aa).

10 to 18 (GPASSGKST) is a binding site for ATP.

Belongs to the cytidylate kinase family. Type 1 subfamily.

The protein localises to the cytoplasm. It catalyses the reaction CMP + ATP = CDP + ADP. The enzyme catalyses dCMP + ATP = dCDP + ADP. The polypeptide is Cytidylate kinase (Streptococcus agalactiae serotype Ia (strain ATCC 27591 / A909 / CDC SS700)).